Consider the following 576-residue polypeptide: Glutamine--tRNA ligase (576 aa).

The short motif at proline 47 to histidine 57 is the 'HIGH' region element. ATP is bound by residues glutamate 48–asparagine 50 and histidine 54–serine 60. 2 residues coordinate L-glutamine: aspartate 80 and tyrosine 229. ATP contacts are provided by residues threonine 248 and arginine 283–leucine 284. The 'KMSKS' region signature appears at isoleucine 290 to arginine 294.

The protein belongs to the class-I aminoacyl-tRNA synthetase family. In terms of assembly, monomer.

The protein localises to the cytoplasm. The catalysed reaction is tRNA(Gln) + L-glutamine + ATP = L-glutaminyl-tRNA(Gln) + AMP + diphosphate. In Ralstonia pickettii (strain 12J), this protein is Glutamine--tRNA ligase.